The chain runs to 409 residues: Elongation factor Tu, chloroplastic (409 aa).

The region spanning 10 to 214 (KPHVNIGTIG…AVDEYIPTPE (205 aa)) is the tr-type G domain. The tract at residues 19 to 26 (GHVDHGKT) is G1. GTP is bound at residue 19–26 (GHVDHGKT). Residue T26 participates in Mg(2+) binding. A G2 region spans residues 60–64 (GITIN). A G3 region spans residues 81-84 (DCPG). Residues 81–85 (DCPGH) and 136–139 (NKED) contribute to the GTP site. A G4 region spans residues 136 to 139 (NKED). A G5 region spans residues 174–176 (SAL).

Belongs to the TRAFAC class translation factor GTPase superfamily. Classic translation factor GTPase family. EF-Tu/EF-1A subfamily.

Its subcellular location is the plastid. It is found in the chloroplast. It catalyses the reaction GTP + H2O = GDP + phosphate + H(+). In terms of biological role, GTP hydrolase that promotes the GTP-dependent binding of aminoacyl-tRNA to the A-site of ribosomes during protein biosynthesis. The protein is Elongation factor Tu, chloroplastic (tufA) of Phaeodactylum tricornutum (strain CCAP 1055/1).